The following is a 427-amino-acid chain: UDP-N-acetyl-D-mannosamine dehydrogenase (427 aa).

Positions 19, 20, 39, 44, 91, and 130 each coordinate NAD(+). The UDP-N-acetyl-alpha-D-mannosaminouronate site is built by Arg155, Val156, Lys207, Asn211, Arg214, His245, Arg247, and Gly258. Lys207 acts as the Proton donor/acceptor in catalysis. The active-site Nucleophile is Cys261. Tyr318 and Lys319 together coordinate UDP-N-acetyl-alpha-D-mannosaminouronate. Arg326 is an NAD(+) binding site. Lys404 is a binding site for UDP-N-acetyl-alpha-D-mannosaminouronate.

Belongs to the UDP-glucose/GDP-mannose dehydrogenase family. Homotetramer; probably dimer of dimers.

It catalyses the reaction UDP-N-acetyl-alpha-D-mannosamine + 2 NAD(+) + H2O = UDP-N-acetyl-alpha-D-mannosaminouronate + 2 NADH + 3 H(+). Catalyzes the four-electron oxidation of UDP-N-acetyl-D-mannosamine (UDP-ManNAc), reducing NAD(+) and releasing UDP-N-acetylmannosaminuronic acid (UDP-ManNAcA). In Methanococcus vannielii (strain ATCC 35089 / DSM 1224 / JCM 13029 / OCM 148 / SB), this protein is UDP-N-acetyl-D-mannosamine dehydrogenase (wecC).